The following is an 877-amino-acid chain: Phosphoenolpyruvate carboxylase (877 aa).

Catalysis depends on residues H138 and K544.

Belongs to the PEPCase type 1 family. It depends on Mg(2+) as a cofactor.

It catalyses the reaction oxaloacetate + phosphate = phosphoenolpyruvate + hydrogencarbonate. Functionally, forms oxaloacetate, a four-carbon dicarboxylic acid source for the tricarboxylic acid cycle. This Vibrio parahaemolyticus serotype O3:K6 (strain RIMD 2210633) protein is Phosphoenolpyruvate carboxylase.